Consider the following 519-residue polypeptide: Fatty acid--[acyl-carrier-protein] ligase ScoC (519 aa).

Residue Thr167 coordinates Mg(2+). Ile216 and Thr312 together coordinate ATP. Glu313 provides a ligand contact to Mg(2+). Residues Asp394 and Lys411 each coordinate ATP.

Belongs to the ATP-dependent AMP-binding enzyme family. Mg(2+) is required as a cofactor.

The enzyme catalyses a medium-chain fatty acid + holo-[ACP] + ATP = a medium-chain fatty acyl-[ACP] + AMP + diphosphate. The catalysed reaction is a medium-chain fatty acid + ATP + H(+) = a medium-chain fatty acyl-AMP + diphosphate. It carries out the reaction a medium-chain fatty acyl-AMP + holo-[ACP] = a medium-chain fatty acyl-[ACP] + AMP + H(+). It catalyses the reaction octanoate + holo-[ACP] + ATP = octanoyl-[ACP] + AMP + diphosphate. The enzyme catalyses octanoate + ATP + H(+) = octanoyl-AMP + diphosphate. The catalysed reaction is octanoyl-AMP + holo-[ACP] = octanoyl-[ACP] + AMP + H(+). It carries out the reaction a (2E)-enoyl fatty acid + holo-[ACP] + ATP = a (2E)-enoyl-[ACP] + AMP + diphosphate. It catalyses the reaction a (2E)-enoyl fatty acid + ATP + H(+) = a (2E)-2-fatty-enoyl-AMP + diphosphate. The enzyme catalyses a (2E)-2-fatty-enoyl-AMP + holo-[ACP] = a (2E)-enoyl-[ACP] + AMP + H(+). The catalysed reaction is (2E)-2-butenoate + holo-[ACP] + ATP = (2E)-butenoyl-[ACP] + AMP + diphosphate. It carries out the reaction (2E)-2-butenoate + ATP + H(+) = (2E)-but-2-enoyl-AMP + diphosphate. It catalyses the reaction (2E)-but-2-enoyl-AMP + holo-[ACP] = (2E)-butenoyl-[ACP] + AMP + H(+). The enzyme catalyses a (3R)-3-isocyanyl-fatty acid + holo-[ACP] + ATP = a (3R)-3-isocyanyl-fatty acyl-[ACP] + AMP + diphosphate. The catalysed reaction is a (3R)-3-isocyanyl-fatty acid + ATP + H(+) = a (3R)-3-isocyanyl-fatty acyl-AMP + diphosphate. It carries out the reaction a (3R)-3-isocyanyl-fatty acyl-AMP + holo-[ACP] = a (3R)-3-isocyanyl-fatty acyl-[ACP] + AMP + H(+). It catalyses the reaction (3R)-3-isocyanylbutanoate + holo-[ACP] + ATP = (3R)-3-isocyanylbutanoyl-[ACP] + AMP + diphosphate. The enzyme catalyses (3R)-3-isocyanylbutanoate + ATP + H(+) = (3R)-3-isocyanylbutanoyl-AMP + diphosphate. The catalysed reaction is (3R)-3-isocyanylbutanoyl-AMP + holo-[ACP] = (3R)-3-isocyanylbutanoyl-[ACP] + AMP + H(+). In terms of biological role, acyl:acyl-carrier protein ligase involved in the biosynthesis of a unique class of isonitrile lipopeptides (INLPs). Shows a strong preference for fatty acids with a short/medium-chain length (C4-C8) in vitro, and accepts alpha,beta-unsaturated fatty acids such as crotonate, which seems to be a physiological substrate. Acts twice during the INLP pathway, catalyzing the activation of crotonate ((2E)-2-butenoate) as well as (3R)-3-isocyanylbutanoate as acyl-adenylates (acyl-AMP), and then the acyl transfer to the dedicated acyl-carrier protein ScoB. This Streptomyces coeruleorubidus protein is Fatty acid--[acyl-carrier-protein] ligase ScoC.